The primary structure comprises 125 residues: Phosphoribosyl-AMP cyclohydrolase (125 aa).

Asp-74 contacts Mg(2+). Cys-75 lines the Zn(2+) pocket. 2 residues coordinate Mg(2+): Asp-76 and Asp-78. Residues Cys-92 and Cys-99 each contribute to the Zn(2+) site.

It belongs to the PRA-CH family. Homodimer. Requires Mg(2+) as cofactor. Zn(2+) is required as a cofactor.

The protein resides in the cytoplasm. The catalysed reaction is 1-(5-phospho-beta-D-ribosyl)-5'-AMP + H2O = 1-(5-phospho-beta-D-ribosyl)-5-[(5-phospho-beta-D-ribosylamino)methylideneamino]imidazole-4-carboxamide. It participates in amino-acid biosynthesis; L-histidine biosynthesis; L-histidine from 5-phospho-alpha-D-ribose 1-diphosphate: step 3/9. In terms of biological role, catalyzes the hydrolysis of the adenine ring of phosphoribosyl-AMP. The sequence is that of Phosphoribosyl-AMP cyclohydrolase from Geobacter metallireducens (strain ATCC 53774 / DSM 7210 / GS-15).